The chain runs to 168 residues: Photosystem I assembly protein Ycf3 (168 aa).

TPR repeat units follow at residues 35-68 (AFTY…EIDP), 72-105 (SYIL…NPFL), and 120-153 (GEQA…TPGN).

It belongs to the Ycf3 family.

It is found in the plastid. It localises to the chloroplast thylakoid membrane. In terms of biological role, essential for the assembly of the photosystem I (PSI) complex. May act as a chaperone-like factor to guide the assembly of the PSI subunits. This is Photosystem I assembly protein Ycf3 from Atropa belladonna (Belladonna).